The chain runs to 163 residues: PTS system fructose-specific EIIB component (163 aa).

The PTS EIIB type-4 domain maps to Met-1 to Lys-163. His-15 acts as the Pros-phosphohistidine intermediate in catalysis. His-15 carries the phosphohistidine; by EIIA modification.

Its subcellular location is the cytoplasm. The enzyme catalyses D-fructose(out) + N(pros)-phospho-L-histidyl-[protein] = D-fructose 1-phosphate(in) + L-histidyl-[protein]. Functionally, the phosphoenolpyruvate-dependent sugar phosphotransferase system (sugar PTS), a major carbohydrate active -transport system, catalyzes the phosphorylation of incoming sugar substrates concomitantly with their translocation across the cell membrane. The enzyme II LevDE PTS system is involved in fructose transport. Its function is as follows. LevD and LevE act as negative regulators of the levanase operon. They may be involved in a PTS-mediated phosphorylation of a regulator. The sequence is that of PTS system fructose-specific EIIB component from Bacillus subtilis (strain 168).